Reading from the N-terminus, the 1382-residue chain is Hepatocyte growth factor receptor (1382 aa).

The first 24 residues, 1–24 (MKASAVLAPGILALLFTLVQGNDG), serve as a signal peptide directing secretion. Residues 25-933 (ECQEALAKSE…VIVQPDQNFT (909 aa)) lie on the Extracellular side of the membrane. The Sema domain occupies 27 to 516 (QEALAKSEMN…TGKKITKIPL (490 aa)). Residues asparagine 45, asparagine 100, and asparagine 106 are each glycosylated (N-linked (GlcNAc...) asparagine). 4 disulfides stabilise this stretch: cysteine 95/cysteine 101, cysteine 98/cysteine 160, cysteine 133/cysteine 141, and cysteine 173/cysteine 176. Asparagine 203 and asparagine 359 each carry an N-linked (GlcNAc...) asparagine glycan. 2 disulfide bridges follow: cysteine 299/cysteine 364 and cysteine 386/cysteine 398. Asparagine 400 and asparagine 406 each carry an N-linked (GlcNAc...) asparagine glycan. Disulfide bonds link cysteine 521/cysteine 539, cysteine 527/cysteine 562, cysteine 530/cysteine 546, and cysteine 542/cysteine 552. 3 IPT/TIG domains span residues 564-656 (PAIH…FSYV), 658-740 (PVIT…FSYR), and 743-837 (PIVH…LIYV). The O-linked (Man) threonine glycan is linked to threonine 583. N-linked (GlcNAc...) asparagine glycans are attached at residues asparagine 608 and asparagine 636. 2 O-linked (Man) threonine glycosylation sites follow: threonine 677 and threonine 762. N-linked (GlcNAc...) asparagine glycosylation is found at asparagine 786, asparagine 880, and asparagine 931. Residues 934 to 956 (GLIVGVVSISIILLLLLGLFLWM) form a helical membrane-spanning segment. The Cytoplasmic segment spans residues 957 to 1382 (KKRKQIKDLG…QDNVNGEVDT (426 aa)). Serine 967 bears the Phosphoserine mark. Threonine 978 carries the post-translational modification Phosphothreonine. Phosphoserine is present on residues serine 991, serine 998, and serine 1001. Tyrosine 1004 is subject to Phosphotyrosine. Residues 1079–1346 (VHFNEVIGRG…RISAIFSTFI (268 aa)) enclose the Protein kinase domain. Residues 1085 to 1093 (IGRGHFGCV) and lysine 1111 each bind ATP. Residue aspartate 1205 is the Proton acceptor of the active site. The interaction with RANBP9 stretch occupies residues 1213–1382 (LDEKFTVKVA…QDNVNGEVDT (170 aa)). Position 1231 is a phosphotyrosine (tyrosine 1231). Residues tyrosine 1235 and tyrosine 1236 each carry the phosphotyrosine; by autocatalysis modification. At threonine 1290 the chain carries Phosphothreonine. The tract at residues 1321-1360 (WHPKAEMRPSFSELVSRISAIFSTFIGEHYVHVNATYVNV) is interaction with MUC20. 2 positions are modified to phosphotyrosine; by autocatalysis: tyrosine 1350 and tyrosine 1357. Position 1366 is a phosphotyrosine (tyrosine 1366).

This sequence belongs to the protein kinase superfamily. Tyr protein kinase family. Heterodimer made of an alpha chain (50 kDa) and a beta chain (145 kDa) which are disulfide linked. Binds PLXNB1. Interacts when phosphorylated with downstream effectors including STAT3, PIK3R1, SRC, PCLG1, GRB2 and GAB1. Interacts with SPSB1, SPSB2 and SPSB4. Interacts with INPP5D/SHIP1. When phosphorylated at Tyr-1357, interacts with INPPL1/SHIP2. Interacts with RANBP9 and RANBP10, as well as SPSB1, SPSB2, SPSB3 and SPSB4. SPSB1 binding occurs in the presence and in the absence of HGF, however HGF treatment has a positive effect on this interaction. Interacts with MUC20; prevents interaction with GRB2 and suppresses hepatocyte growth factor-induced cell proliferation. Interacts with GRB10. Interacts with PTPN1 and PTPN2. Interacts with HSP90AA1 and HSP90AB1; the interaction suppresses MET kinase activity. Interacts with tensin TNS3. Interacts (when phosphorylated) with tensin TNS4 (via SH2 domain); the interaction increases MET protein stability by inhibiting MET endocytosis and subsequent lysosomal degradation. In terms of processing, autophosphorylated in response to ligand binding on Tyr-1235 and Tyr-1236 in the kinase domain leading to further phosphorylation of Tyr-1350 and Tyr-1357 in the C-terminal multifunctional docking site. Dephosphorylated by PTPRJ at Tyr-1350 and Tyr-1366. Dephosphorylated by PTPN1 and PTPN2. Ubiquitinated. Ubiquitination by CBL regulates the receptor stability and activity through proteasomal degradation. Post-translationally, O-mannosylation of IPT/TIG domains by TMEM260 is required for protein maturation. O-mannosylated residues are composed of single mannose glycans that are not elongated or modified.

Its subcellular location is the membrane. The enzyme catalyses L-tyrosyl-[protein] + ATP = O-phospho-L-tyrosyl-[protein] + ADP + H(+). In its inactive state, the C-terminal tail interacts with the catalytic domain and inhibits the kinase activity. Upon ligand binding, the C-terminal tail is displaced and becomes phosphorylated, thus increasing the kinase activity. In terms of biological role, receptor tyrosine kinase that transduces signals from the extracellular matrix into the cytoplasm by binding to hepatocyte growth factor/HGF ligand. Regulates many physiological processes including proliferation, scattering, morphogenesis and survival. Ligand binding at the cell surface induces autophosphorylation of MET on its intracellular domain that provides docking sites for downstream signaling molecules. Following activation by ligand, interacts with the PI3-kinase subunit PIK3R1, PLCG1, SRC, GRB2, STAT3 or the adapter GAB1. Recruitment of these downstream effectors by MET leads to the activation of several signaling cascades including the RAS-ERK, PI3 kinase-AKT, or PLCgamma-PKC. The RAS-ERK activation is associated with the morphogenetic effects while PI3K/AKT coordinates prosurvival effects. During embryonic development, MET signaling plays a role in gastrulation, development and migration of muscles and neuronal precursors, angiogenesis and kidney formation. In adults, participates in wound healing as well as organ regeneration and tissue remodeling. Also promotes differentiation and proliferation of hematopoietic cells. In Eulemur macaco macaco (Black lemur), this protein is Hepatocyte growth factor receptor (MET).